A 151-amino-acid polypeptide reads, in one-letter code: Large ribosomal subunit protein bL9 (151 aa).

Belongs to the bacterial ribosomal protein bL9 family.

Its function is as follows. Binds to the 23S rRNA. This is Large ribosomal subunit protein bL9 from Nitrosomonas europaea (strain ATCC 19718 / CIP 103999 / KCTC 2705 / NBRC 14298).